A 1604-amino-acid chain; its full sequence is Collagen alpha-1(XVI) chain (1604 aa).

Positions 1-21 (MWVSWAPGLWLLGLWATFGHG) are cleaved as a signal peptide. Residue Asn47 is glycosylated (N-linked (GlcNAc...) asparagine). A Laminin G-like domain is found at 50 to 231 (GFNLIHRLSL…LQQVHIYCDP (182 aa)). Residues 232-374 (ELVLEEGCCE…SPDAPLQCAE (143 aa)) form a nonhelical region 10 (NC10) region. A compositionally biased stretch (basic and acidic residues) spans 301-311 (AERGAKVHQET). The segment at 301-509 (AERGAKVHQE…KGEKGDPCEV (209 aa)) is disordered. Asn327 is a glycosylation site (N-linked (GlcNAc...) asparagine). Positions 375–423 (GPKGEKGESGALGPSGLPGSTGEKGQKGEKGDGGIKGVPGKPGRDGRPG) constitute a Collagen-like 1 domain. Residues 375-506 (GPKGEKGESG…PGVKGEKGDP (132 aa)) are triple-helical region 9 (COL9) with 3 imperfections. The span at 383–397 (SGALGPSGLPGSTGE) shows a compositional bias: low complexity. Basic and acidic residues predominate over residues 398-407 (KGQKGEKGDG). Residues 449 to 460 (PGPPGLPGPPGI) show a composition bias toward pro residues. Residues 486-495 (GKEGPGGKPG) are compositionally biased toward gly residues. Residues 507–521 (CEVCPTLPEGFQNFV) are nonhelical region 9 (NC9). The interval 522 to 555 (GLPGKPGPKGEPGDPVPARGDPGIQGIKGEKGEP) is triple-helical region 8 (COL8) with 1 imperfection. Positions 540–542 (RGD) match the Cell attachment site motif. The tract at residues 556-572 (CLSCSSVVGAQHLVSST) is nonhelical region 8 (NC8). The tract at residues 573–631 (GASGDVGSPGFGLPGLPGRAGVPGLKGEKGNFGEAGPAGSPGPPGPVGPAGIKGAKGEP) is triple-helical region 7 (COL7) with 1 imperfection. 2 consecutive Collagen-like domains span residues 573 to 633 (GASG…EPCE) and 667 to 721 (GLPG…GEKG). A disordered region spans residues 604 to 917 (FGEAGPAGSP…PPGIPGPPGP (314 aa)). Residues 632-652 (CEPCPALSNLQDGDVRVVALP) form a nonhelical region 7 (NC7) region. The tract at residues 653-723 (GPSGEKGEPG…AGPKGEKGDG (71 aa)) is triple-helical region 6 (COL6) with 1 imperfection. Positions 674–684 (KAGERGLKGQK) are enriched in basic and acidic residues. Over residues 686–702 (DAGNPGDPGTPGTTGRP) the composition is skewed to low complexity. Residues 724 to 738 (CTACPSLQGTVTDMA) are nonhelical region 6 (NC6). A triple-helical region 5 (COL5) with 3 imperfections region spans residues 739–876 (GRPGQPGPKG…RGEKGEPGEC (138 aa)). Low complexity-rich tracts occupy residues 766–781 (LPGVQGPPGLKGVQGE), 792–808 (PQGEPGAPGLPGIQGLP), and 826–846 (PGVKGATGPVGPPGASVSGPP). Residues 788–840 (GVQGPQGEPGAPGLPGIQGLPGPRGPPGPTGEKGAQGSPGVKGATGPVGPPGA) enclose the Collagen-like 4 domain. A compositionally biased stretch (basic and acidic residues) spans 864–873 (KGPRGEKGEP). Positions 877 to 887 (SCPSQGDLIFS) are nonhelical region 5 (NC5). The 51-residue stretch at 888 to 938 (GMPGAPGLWMGSSWQPGPQGPPGIPGPPGPPGVPGLQGVPGNNGLPGQPGL) folds into the Collagen-like 5 domain. Residues 888 to 939 (GMPGAPGLWMGSSWQPGPQGPPGIPGPPGPPGVPGLQGVPGNNGLPGQPGLT) are triple-helical region 4 (COL4) with 2 imperfections. Residues 905–917 (PQGPPGIPGPPGP) show a composition bias toward pro residues. The segment at 940–973 (AELGSLPIEQHLLKSICGDCVQGQRAHPGYLVEK) is nonhelical region 4 (NC4). Residues 974–988 (GEKGDQGIPGVPGLD) form a triple-helical region 3 (COL3) region. The tract at residues 989–1011 (NCAQCFLSLERPRAEEARGDNSE) is nonhelical region 3 (NC3). Disordered stretches follow at residues 1001–1429 (RAEE…VPGS) and 1468–1517 (MAAA…PGTK). The short motif at 1006 to 1008 (RGD) is the Cell attachment site element. Residues 1012–1433 (GDPGCVGSPG…PGVPGSMGDM (422 aa)) are triple-helical region 2 (COL2) with 2 imperfections. The Collagen-like 6 domain maps to 1018-1075 (GSPGLPGPPGLPGQRGEEGPPGMRGSPGPPGPIGPPGFPGAVGSPGLPGLQGERGLTG). 3 stretches are compositionally biased toward pro residues: residues 1044–1055 (PGPPGPIGPPGF), 1160–1169 (FPGPPGPPGF), and 1199–1208 (SPGPPGPPGI). A compositionally biased stretch (basic and acidic residues) spans 1217 to 1226 (LDGKDGKPGL). The Cell attachment site motif lies at 1227–1229 (RGD). Residues 1271–1284 (RPGAEGEPGAMGPQ) are compositionally biased toward low complexity. 2 stretches are compositionally biased toward pro residues: residues 1286–1302 (RPGPPGHVGPPGPPGQP) and 1330–1342 (QPGPPGHPGPPGE). The segment covering 1369 to 1378 (DPGAAGQKGQ) has biased composition (low complexity). Residues 1386-1395 (GMPGGPGKSG) are compositionally biased toward gly residues. The segment covering 1420 to 1429 (SPGLPGVPGS) has biased composition (low complexity). The nonhelical region 2 (NC2) stretch occupies residues 1434–1472 (VNYDEIKRFIRQEIIKMFDERMAYYTSRMQFPMEMAAAP). Collagen-like domains follow at residues 1472-1524 (PGRP…GDIG) and 1528-1576 (AGEN…GKAG). The segment at 1473 to 1578 (GRPGPPGKDG…MGQPGKAGHC (106 aa)) is triple-helical region 1 (COL1) with 2 imperfections. A nonhelical region 1 (NC1) region spans residues 1579-1604 (NPSDCFGAMPMEQQYPPMKTMKGPFG).

This sequence belongs to the fibril-associated collagens with interrupted helices (FACIT) family. As to quaternary structure, homotrimer. Interacts with FBN1, fibronectin and integrins ITGA1/ITGB1 and ITGA2/ITGB1. Integrin ITGA1/ITGB1 binds to a unique site within COL16A1 located close to its C-terminal end between collagenous domains COL1-COL3. In terms of processing, prolines at the third position of the tripeptide repeating unit (G-X-Y) are hydroxylated in some or all of the chains. Glycosylated. In papillary dermis, is a component of specialized fibrillin-1-containing microfibrils, whereas in territorial cartilage matrix, it is localized to a discrete population of thin, weakly banded collagen fibrils in association with other collagens (at protein level). In the placenta, where it is found in the amnion, a membranous tissue lining the amniotic cavity. Within the amnion, it is found in an acellular, relatively dense layer of a complex network of reticular fibers. Also located to a fibroblast layer beneath this dense layer. Exists in tissues in association with other types of collagen.

Its subcellular location is the secreted. It is found in the extracellular space. It localises to the extracellular matrix. In terms of biological role, involved in mediating cell attachment and inducing integrin-mediated cellular reactions, such as cell spreading and alterations in cell morphology. The polypeptide is Collagen alpha-1(XVI) chain (COL16A1) (Homo sapiens (Human)).